Consider the following 388-residue polypeptide: LL-diaminopimelate aminotransferase (388 aa).

Substrate-binding residues include tyrosine 15 and glycine 40. Pyridoxal 5'-phosphate is bound by residues tyrosine 69, 103–104, tyrosine 128, asparagine 178, tyrosine 209, and 237–239; these read SK and SLS. Substrate contacts are provided by lysine 104, tyrosine 128, and asparagine 178. Lysine 240 carries the post-translational modification N6-(pyridoxal phosphate)lysine. Arginine 248 contacts pyridoxal 5'-phosphate. Residue arginine 366 coordinates substrate.

It belongs to the class-I pyridoxal-phosphate-dependent aminotransferase family. LL-diaminopimelate aminotransferase subfamily. Homodimer. The cofactor is pyridoxal 5'-phosphate.

It carries out the reaction (2S,6S)-2,6-diaminopimelate + 2-oxoglutarate = (S)-2,3,4,5-tetrahydrodipicolinate + L-glutamate + H2O + H(+). It functions in the pathway amino-acid biosynthesis; L-lysine biosynthesis via DAP pathway; LL-2,6-diaminopimelate from (S)-tetrahydrodipicolinate (aminotransferase route): step 1/1. Involved in the synthesis of meso-diaminopimelate (m-DAP or DL-DAP), required for both lysine and peptidoglycan biosynthesis. Catalyzes the direct conversion of tetrahydrodipicolinate to LL-diaminopimelate. Can also use m-DAP instead of LL-DAP as the amino-group donor. The protein is LL-diaminopimelate aminotransferase of Syntrophobacter fumaroxidans (strain DSM 10017 / MPOB).